Reading from the N-terminus, the 229-residue chain is Potassium/proton antiporter CemA (229 aa).

3 helical membrane passes run phenylalanine 7–phenylalanine 27, leucine 114–leucine 134, and isoleucine 189–isoleucine 209.

Belongs to the CemA family.

The protein localises to the plastid. It is found in the chloroplast inner membrane. It carries out the reaction K(+)(in) + H(+)(out) = K(+)(out) + H(+)(in). In terms of biological role, contributes to K(+)/H(+) antiport activity by supporting proton efflux to control proton extrusion and homeostasis in chloroplasts in a light-dependent manner to modulate photosynthesis. Prevents excessive induction of non-photochemical quenching (NPQ) under continuous-light conditions. Indirectly promotes efficient inorganic carbon uptake into chloroplasts. In Ipomoea purpurea (Common morning glory), this protein is Potassium/proton antiporter CemA.